Consider the following 149-residue polypeptide: MEQTYVMVKPDGVQRGLVGEVISRIEKRGLKIVALRMNVIAEATAKEHYGEHAARPFFPSLIEFITSGPSVSMVVAGKDAIKVMRAINGATNPVDAAPGTIRGDFALDVGRNVVHASDSPEAAAREIAIHFKDSEIANYSRVDEVCLYE.

Residues K9, F57, R85, T91, R102, and N112 each coordinate ATP. H115 serves as the catalytic Pros-phosphohistidine intermediate.

It belongs to the NDK family. The cofactor is Mg(2+).

The protein localises to the cytoplasm. The enzyme catalyses a 2'-deoxyribonucleoside 5'-diphosphate + ATP = a 2'-deoxyribonucleoside 5'-triphosphate + ADP. The catalysed reaction is a ribonucleoside 5'-diphosphate + ATP = a ribonucleoside 5'-triphosphate + ADP. Functionally, major role in the synthesis of nucleoside triphosphates other than ATP. The ATP gamma phosphate is transferred to the NDP beta phosphate via a ping-pong mechanism, using a phosphorylated active-site intermediate. This is Nucleoside diphosphate kinase from Methanosarcina mazei (strain ATCC BAA-159 / DSM 3647 / Goe1 / Go1 / JCM 11833 / OCM 88) (Methanosarcina frisia).